We begin with the raw amino-acid sequence, 673 residues long: UvrABC system protein B (673 aa).

The 389-residue stretch at 26 to 414 folds into the Helicase ATP-binding domain; the sequence is EGLEDGLAHQ…GDEVVDQVVR (389 aa). An ATP-binding site is contributed by 39–46; it reads GVTGSGKT. The Beta-hairpin motif lies at 92 to 115; that stretch reads YYDYYQPEAYVPSSDTFIEKDASV. The region spanning 431-597 is the Helicase C-terminal domain; it reads QVDDLLSEIR…GLNKKVVDIL (167 aa). Residues 633–668 enclose the UVR domain; sequence QQKIHELEEQMMQHAQNLEFEEAAQIRDQLHQLREL.

The protein belongs to the UvrB family. As to quaternary structure, forms a heterotetramer with UvrA during the search for lesions. Interacts with UvrC in an incision complex.

Its subcellular location is the cytoplasm. In terms of biological role, the UvrABC repair system catalyzes the recognition and processing of DNA lesions. A damage recognition complex composed of 2 UvrA and 2 UvrB subunits scans DNA for abnormalities. Upon binding of the UvrA(2)B(2) complex to a putative damaged site, the DNA wraps around one UvrB monomer. DNA wrap is dependent on ATP binding by UvrB and probably causes local melting of the DNA helix, facilitating insertion of UvrB beta-hairpin between the DNA strands. Then UvrB probes one DNA strand for the presence of a lesion. If a lesion is found the UvrA subunits dissociate and the UvrB-DNA preincision complex is formed. This complex is subsequently bound by UvrC and the second UvrB is released. If no lesion is found, the DNA wraps around the other UvrB subunit that will check the other stand for damage. This chain is UvrABC system protein B, found in Salmonella typhi.